We begin with the raw amino-acid sequence, 202 residues long: FMN-dependent NADH:quinone oxidoreductase (202 aa).

FMN contacts are provided by residues Ser-12 and 21-23; that span reads SFS.

It belongs to the azoreductase type 1 family. In terms of assembly, homodimer. FMN serves as cofactor.

The catalysed reaction is 2 a quinone + NADH + H(+) = 2 a 1,4-benzosemiquinone + NAD(+). The enzyme catalyses N,N-dimethyl-1,4-phenylenediamine + anthranilate + 2 NAD(+) = 2-(4-dimethylaminophenyl)diazenylbenzoate + 2 NADH + 2 H(+). Quinone reductase that provides resistance to thiol-specific stress caused by electrophilic quinones. Functionally, also exhibits azoreductase activity. Catalyzes the reductive cleavage of the azo bond in aromatic azo compounds to the corresponding amines. The sequence is that of FMN-dependent NADH:quinone oxidoreductase from Mycoplasma mobile (strain ATCC 43663 / 163K / NCTC 11711) (Mesomycoplasma mobile).